A 351-amino-acid polypeptide reads, in one-letter code: Glycerol-1-phosphate dehydrogenase [NAD(P)+] (351 aa).

NAD(+) contacts are provided by residues 97-101 (GKVID) and 119-122 (TSPS). Substrate is bound at residue D124. S128 is an NAD(+) binding site. Residue D171 coordinates substrate. Zn(2+) is bound by residues D171 and H251. H255 serves as a coordination point for substrate. Residue H267 participates in Zn(2+) binding.

This sequence belongs to the glycerol-1-phosphate dehydrogenase family. Homodimer. Zn(2+) is required as a cofactor.

The protein resides in the cytoplasm. The catalysed reaction is sn-glycerol 1-phosphate + NAD(+) = dihydroxyacetone phosphate + NADH + H(+). It carries out the reaction sn-glycerol 1-phosphate + NADP(+) = dihydroxyacetone phosphate + NADPH + H(+). It participates in membrane lipid metabolism; glycerophospholipid metabolism. Catalyzes the NAD(P)H-dependent reduction of dihydroxyacetonephosphate (DHAP or glycerone phosphate) to glycerol 1-phosphate (G1P). The G1P thus generated is used as the glycerophosphate backbone of phospholipids in the cellular membranes of Archaea. The chain is Glycerol-1-phosphate dehydrogenase [NAD(P)+] from Saccharolobus islandicus (strain Y.N.15.51 / Yellowstone #2) (Sulfolobus islandicus).